The primary structure comprises 226 residues: uncharacterized protein (226 aa).

Disordered stretches follow at residues 1–20 (MGAE…AVQT) and 205–226 (LDRK…QRDA).

This is an uncharacterized protein from Treponema pallidum (strain Nichols).